The sequence spans 998 residues: Bifunctional glutamine synthetase adenylyltransferase/adenylyl-removing enzyme (998 aa).

The segment at 1–487 (MVVTKPATQR…LHAKLFYQPL (487 aa)) is adenylyl removase. Positions 492 to 998 (GPAGLEIRHG…KAVVCKVFGS (507 aa)) are adenylyl transferase.

This sequence belongs to the GlnE family. Mg(2+) is required as a cofactor.

It catalyses the reaction [glutamine synthetase]-O(4)-(5'-adenylyl)-L-tyrosine + phosphate = [glutamine synthetase]-L-tyrosine + ADP. It carries out the reaction [glutamine synthetase]-L-tyrosine + ATP = [glutamine synthetase]-O(4)-(5'-adenylyl)-L-tyrosine + diphosphate. Functionally, involved in the regulation of glutamine synthetase GlnA, a key enzyme in the process to assimilate ammonia. When cellular nitrogen levels are high, the C-terminal adenylyl transferase (AT) inactivates GlnA by covalent transfer of an adenylyl group from ATP to specific tyrosine residue of GlnA, thus reducing its activity. Conversely, when nitrogen levels are low, the N-terminal adenylyl removase (AR) activates GlnA by removing the adenylyl group by phosphorolysis, increasing its activity. The regulatory region of GlnE binds the signal transduction protein PII (GlnB) which indicates the nitrogen status of the cell. The sequence is that of Bifunctional glutamine synthetase adenylyltransferase/adenylyl-removing enzyme from Mycolicibacterium paratuberculosis (strain ATCC BAA-968 / K-10) (Mycobacterium paratuberculosis).